The primary structure comprises 425 residues: Ribosome biogenesis protein WDR12 homolog (425 aa).

Positions 13–94 (LQLHLITKQK…EDTVELEYVE (82 aa)) are ubiquitin-like (UBL) domain. WD repeat units lie at residues 106 to 143 (LHDD…KLTI), 145 to 187 (GHIA…NSVE), 194 to 233 (GHER…GGGD), 258 to 296 (GHRE…IKSE), 298 to 337 (SGNK…GTLV), 343 to 383 (GHTQ…APIF), and 387 to 425 (GHED…GGEK). Residues 227–247 (VRSGGGDSEPSTSKRQKLDQG) form a disordered region.

Belongs to the WD repeat WDR12/YTM1 family.

It is found in the nucleus. It localises to the nucleolus. Its subcellular location is the nucleoplasm. In terms of biological role, required for maturation of ribosomal RNAs and formation of the large ribosomal subunit. The sequence is that of Ribosome biogenesis protein WDR12 homolog from Culex quinquefasciatus (Southern house mosquito).